The primary structure comprises 200 residues: Guanylate kinase (200 aa).

Residues G4–R183 form the Guanylate kinase-like domain. G11–S18 is an ATP binding site.

The protein belongs to the guanylate kinase family.

The protein localises to the cytoplasm. It carries out the reaction GMP + ATP = GDP + ADP. Functionally, essential for recycling GMP and indirectly, cGMP. This is Guanylate kinase from Helicobacter hepaticus (strain ATCC 51449 / 3B1).